The sequence spans 192 residues: Hydrogenase expression/formation protein HupD (192 aa).

Residues Glu23, Asp69, and His100 each contribute to the Ni(2+) site.

Belongs to the peptidase A31 family.

Functionally, not known. Could be involved in the processing of hydrogenase. This is Hydrogenase expression/formation protein HupD (hupD) from Bradyrhizobium diazoefficiens (strain JCM 10833 / BCRC 13528 / IAM 13628 / NBRC 14792 / USDA 110).